A 223-amino-acid chain; its full sequence is Retbindin (223 aa).

A signal peptide spans methionine 1–glycine 30. 4 disulfide bridges follow: cysteine 73/cysteine 143, cysteine 80/cysteine 120, cysteine 113/cysteine 157, and cysteine 126/cysteine 139.

The protein belongs to the folate receptor family. Post-translationally, not N-glycosylated.

The protein localises to the secreted. It is found in the extracellular space. Its subcellular location is the extracellular matrix. The protein resides in the interphotoreceptor matrix. It localises to the cell membrane. Functionally, riboflavin-binding protein which might have a role in retinal flavin transport. In Canis lupus familiaris (Dog), this protein is Retbindin (RTBDN).